Reading from the N-terminus, the 172-residue chain is Early E3 18.5 kDa glycoprotein (172 aa).

The signal sequence occupies residues 1–19 (MGAILVVLALLSLLGLGSA). Residues 20–136 (NLNPLDHDPC…SKENIVAFSI (117 aa)) lie on the Lumenal side of the membrane. Residue Asn36 is glycosylated (N-linked (GlcNAc...) asparagine; by host). 2 cysteine pairs are disulfide-bonded: Cys37–Cys55 and Cys49–Cys111. 3 N-linked (GlcNAc...) asparagine; by host glycosylation sites follow: Asn68, Asn72, and Asn102. A helical membrane pass occupies residues 137–157 (AYCLVTCIITAIICVCIHLLI). Residues 158-172 (VIRPRQSNEEKEKMP) are Cytoplasmic-facing. The short motif at 168–172 (KEKMP) is the Di-lysine motif element.

The protein belongs to the adenoviridae E19 family. In terms of processing, both disulfide bonds are absolutely critical for the interaction with MHC antigens. N-glycosylated; high-mannose.

The protein resides in the host endoplasmic reticulum membrane. Its function is as follows. Binds and retains class I heavy chains in the endoplasmic reticulum during the early period of virus infection, thereby impairing their transport to the cell surface. Also delays the expression of class I alleles that it cannot affect by direct retention. Binds transporters associated with antigen processing (TAP) and acts as a tapasin inhibitor, preventing class I/TAP association. In consequence, infected cells are masked for immune recognition by cytotoxic T-lymphocytes. This is Early E3 18.5 kDa glycoprotein from Human adenovirus B serotype 3 (HAdV-3).